The primary structure comprises 382 residues: Pyrimidine monooxygenase RutA (382 aa).

FMN contacts are provided by residues 68–69, Asn134, Glu143, 159–160, and Ser209; these read IK and RY.

Belongs to the NtaA/SnaA/DszA monooxygenase family. RutA subfamily.

The enzyme catalyses uracil + FMNH2 + NADH + O2 = (Z)-3-ureidoacrylate + FMN + NAD(+) + H2O + H(+). It catalyses the reaction thymine + FMNH2 + NADH + O2 = (Z)-2-methylureidoacrylate + FMN + NAD(+) + H2O + H(+). Its function is as follows. Catalyzes the pyrimidine ring opening between N-3 and C-4 by an unusual flavin hydroperoxide-catalyzed mechanism, adding oxygen atoms in the process to yield ureidoacrylate peracid, that immediately reacts with FMN forming ureidoacrylate and FMN-N(5)-oxide. The FMN-N(5)-oxide reacts spontaneously with NADH to produce FMN. Requires the flavin reductase RutF to regenerate FMN in vivo. The polypeptide is Pyrimidine monooxygenase RutA (Escherichia coli (strain B / BL21-DE3)).